The following is a 400-amino-acid chain: Putative transposase for insertion sequence element IS5376 (400 aa).

The 63-residue stretch at Gly5–Met67 folds into the HTH IS21-type domain. A DNA-binding region (H-T-H motif) is located at residues Ile20–His39. The disordered stretch occupies residues Arg35–Lys55. The Integrase catalytic domain maps to Tyr113–Ser287.

Belongs to the transposase IS21/IS408/IS1162 family.

Its function is as follows. Involved in the transposition of the insertion sequence. The chain is Putative transposase for insertion sequence element IS5376 from Geobacillus stearothermophilus (Bacillus stearothermophilus).